Reading from the N-terminus, the 1379-residue chain is ABC multidrug transporter MDR2 (1379 aa).

The helical transmembrane segment at 65–85 (IALIVIGTIAGIGAGIPFPLL) threads the bilayer. The 299-residue stretch at 69-367 (VIGTIAGIGA…MAPFMHIFAS (299 aa)) folds into the ABC transmembrane type-1 1 domain. Asparagine 97 is a glycosylation site (N-linked (GlcNAc...) asparagine). 5 helical membrane passes run 119–139 (VLQVIYVSILNFVCMYIHTGC), 193–213 (KVGLFIGTISYFVAAYIVAFL), 215–235 (VATIAAMLMSVVPIYFLMAFG), 301–321 (IQFGMLYFVAYASNALAFWQG), and 336–356 (VSVGAVYTVIFVLLDASFVLS). The 280-residue stretch at 403–682 (IELQDVTFNY…DGVYAGMVRL (280 aa)) folds into the ABC transporter 1 domain. 438-445 (GTSGSGKS) contacts ATP. Asparagine 552 and asparagine 633 each carry an N-linked (GlcNAc...) asparagine glycan. Positions 738 to 758 (YMPEEADSLPTEPENEKEKPK) are disordered. A run of 4 helical transmembrane segments spans residues 781–801 (LGLITSIMIGVSYTGEAVIFG), 820–840 (GMLFGLLFFILAIVKFAAVIV), 901–921 (IGVLFSTVANLFAGVILSHVI), and 922–942 (AWRIAVVLLATLPVLLASGVL). Residues 781–1068 (LGLITSIMIG…MFALVPDISK (288 aa)) enclose the ABC transmembrane type-1 2 domain. An N-linked (GlcNAc...) asparagine glycan is attached at asparagine 989. A run of 2 helical transmembrane segments spans residues 1008 to 1028 (FWLSLAYSISTLVYALAYWWG) and 1032 to 1052 (ILAGMYTQVQFFIVLPALLFS). In terms of domain architecture, ABC transporter 2 spans 1135 to 1374 (VQFRNVHFRY…CESYRANVIH (240 aa)). ATP is bound at residue 1170–1177 (GPSGSGKS).

This sequence belongs to the ABC transporter superfamily. ABCB family. Multidrug resistance exporter (TC 3.A.1.201) subfamily.

The protein resides in the cell membrane. In terms of biological role, pleiotropic ABC efflux transporter that may be involved in the modulation susceptibility to a wide range of unrelated cytotoxic compounds. The protein is ABC multidrug transporter MDR2 of Trichophyton equinum (strain ATCC MYA-4606 / CBS 127.97) (Horse ringworm fungus).